The primary structure comprises 201 residues: Recombination protein RecR (201 aa).

The segment at 57–72 adopts a C4-type zinc-finger fold; it reads CQQCRNFTEEALCEIC. Positions 81 to 176 constitute a Toprim domain; it reads TTLCIVETPG…NISRIAHGVP (96 aa).

It belongs to the RecR family.

May play a role in DNA repair. It seems to be involved in an RecBC-independent recombinational process of DNA repair. It may act with RecF and RecO. This is Recombination protein RecR from Colwellia psychrerythraea (strain 34H / ATCC BAA-681) (Vibrio psychroerythus).